The following is a 662-amino-acid chain: Transketolase (662 aa).

H28 lines the substrate pocket. Thiamine diphosphate is bound by residues H68 and 115–117; that span reads GPL. D156 contacts Mg(2+). G157 and N186 together coordinate thiamine diphosphate. N186 and I188 together coordinate Mg(2+). Substrate is bound by residues H261, R356, and S383. Position 261 (H261) interacts with thiamine diphosphate. E410 serves as the catalytic Proton donor. F436 contacts thiamine diphosphate. Residues H460, D468, and R519 each coordinate substrate.

It belongs to the transketolase family. Homodimer. The cofactor is Mg(2+). Ca(2+) is required as a cofactor. Mn(2+) serves as cofactor. It depends on Co(2+) as a cofactor. Requires thiamine diphosphate as cofactor.

It catalyses the reaction D-sedoheptulose 7-phosphate + D-glyceraldehyde 3-phosphate = aldehydo-D-ribose 5-phosphate + D-xylulose 5-phosphate. It functions in the pathway carbohydrate biosynthesis; Calvin cycle. It participates in carbohydrate degradation; pentose phosphate pathway. Functionally, catalyzes the transfer of a two-carbon ketol group from a ketose donor to an aldose acceptor, via a covalent intermediate with the cofactor thiamine pyrophosphate. The chain is Transketolase (tkt) from Staphylococcus epidermidis (strain ATCC 35984 / DSM 28319 / BCRC 17069 / CCUG 31568 / BM 3577 / RP62A).